A 148-amino-acid chain; its full sequence is MKLTATLQVVVALLICMYNLPECVSQSNDSPPSTNDWMRTLDKSGCKPRDTVVYLGEEYPESTNLQYNPRCVTVKRCSGCCNGDGQICTAVETRNTTVTVSVTGVSSSSGTNSGVSTNLQRISVTEHTKCDCIGRTTTTPTTTREPRR.

Residues 1 to 25 (MKLTATLQVVVALLICMYNLPECVS) form the signal peptide. 3 disulfide bridges follow: cysteine 46–cysteine 88, cysteine 77–cysteine 130, and cysteine 81–cysteine 132. Residue asparagine 95 is glycosylated (N-linked (GlcNAc...) asparagine; by host).

Belongs to the PDGF/VEGF growth factor family. In terms of assembly, homodimer; disulfide-linked.

Its subcellular location is the secreted. Functionally, induces endothelial proliferation. The chain is Vascular endothelial growth factor homolog from Orf virus (strain NZ7) (OV NZ-7).